The primary structure comprises 239 residues: Peptidyl-tRNA hydrolase (239 aa).

Residue Y14 participates in tRNA binding. The Proton acceptor role is filled by H19. The tRNA site is built by F64, N66, and N112. A disordered region spans residues 188–225 (GGKPDAEEPQAPKKQVGQSHIHKARNAAQPKKLPATGP).

This sequence belongs to the PTH family. In terms of assembly, monomer.

The protein resides in the cytoplasm. The catalysed reaction is an N-acyl-L-alpha-aminoacyl-tRNA + H2O = an N-acyl-L-amino acid + a tRNA + H(+). Functionally, hydrolyzes ribosome-free peptidyl-tRNAs (with 1 or more amino acids incorporated), which drop off the ribosome during protein synthesis, or as a result of ribosome stalling. In terms of biological role, catalyzes the release of premature peptidyl moieties from peptidyl-tRNA molecules trapped in stalled 50S ribosomal subunits, and thus maintains levels of free tRNAs and 50S ribosomes. In Sinorhizobium fredii (strain NBRC 101917 / NGR234), this protein is Peptidyl-tRNA hydrolase.